Reading from the N-terminus, the 89-residue chain is Small ribosomal subunit protein uS15 (89 aa).

This sequence belongs to the universal ribosomal protein uS15 family. In terms of assembly, part of the 30S ribosomal subunit. Forms a bridge to the 50S subunit in the 70S ribosome, contacting the 23S rRNA.

In terms of biological role, one of the primary rRNA binding proteins, it binds directly to 16S rRNA where it helps nucleate assembly of the platform of the 30S subunit by binding and bridging several RNA helices of the 16S rRNA. Forms an intersubunit bridge (bridge B4) with the 23S rRNA of the 50S subunit in the ribosome. In Syntrophomonas wolfei subsp. wolfei (strain DSM 2245B / Goettingen), this protein is Small ribosomal subunit protein uS15.